A 170-amino-acid chain; its full sequence is Superoxide dismutase [Fe] (170 aa).

Fe cation is bound by residues histidine 27, histidine 81, aspartate 163, and histidine 167.

The protein belongs to the iron/manganese superoxide dismutase family. Homodimer. The cofactor is Fe cation.

It carries out the reaction 2 superoxide + 2 H(+) = H2O2 + O2. Its function is as follows. Destroys superoxide anion radicals which are normally produced within the cells and which are toxic to biological systems. This Raoultella planticola (Klebsiella planticola) protein is Superoxide dismutase [Fe] (sodA).